Reading from the N-terminus, the 98-residue chain is Integration host factor subunit beta (98 aa).

Belongs to the bacterial histone-like protein family. As to quaternary structure, heterodimer of an alpha and a beta chain.

This protein is one of the two subunits of integration host factor, a specific DNA-binding protein that functions in genetic recombination as well as in transcriptional and translational control. The protein is Integration host factor subunit beta of Pseudomonas fluorescens (strain SBW25).